Reading from the N-terminus, the 314-residue chain is Olfactory receptor 52B4 (314 aa).

At 1 to 27 (MPTVNHSGTSHTVFHLLGIPGLQDQHM) the chain is on the extracellular side. An N-linked (GlcNAc...) asparagine glycan is attached at asparagine 5. The chain crosses the membrane as a helical span at residues 28 to 48 (WISIPFFISYVTALLGNSLLI). Topologically, residues 49–56 (FIILTKRS) are cytoplasmic. A helical transmembrane segment spans residues 57–77 (LHEPMYLFLCMLAGADIVLST). The Extracellular portion of the chain corresponds to 78–101 (CTIPQALAIFWFRAGDISLDRCIT). A disulfide bond links cysteine 99 and cysteine 191. Residues 102-122 (QLFFIHSTFISESGILLVMAF) traverse the membrane as a helical segment. At 123–141 (DHYIAICYPLRYTTILTNA) the chain is on the cytoplasmic side. The helical transmembrane segment at 142 to 162 (LIKKICVTVSLRSYGTIFPII) threads the bilayer. Topologically, residues 163 to 198 (FLLKRLTFCQNNIIPHTFCEHIGLAKYACNDIRINI) are extracellular. Residues 199–219 (WYGFSILMSTVVLDVVLIFIS) form a helical membrane-spanning segment. Residues 220–239 (YMLILHAVFHMPSPDACHKA) lie on the Cytoplasmic side of the membrane. A helical membrane pass occupies residues 240-260 (LNTFGSHVCIIILFYGSGIFT). The Extracellular segment spans residues 261 to 275 (ILTQRFGRHIPPCIH). Residues 276-296 (IPLANVCILAPPMLNPIIYGI) form a helical membrane-spanning segment. Residues 297-314 (KTKQIQEQVVQFLFIKQK) lie on the Cytoplasmic side of the membrane.

Belongs to the G-protein coupled receptor 1 family.

Its subcellular location is the cell membrane. Its function is as follows. Odorant receptor. This is Olfactory receptor 52B4 (OR52B4) from Homo sapiens (Human).